We begin with the raw amino-acid sequence, 128 residues long: Glycine cleavage system H protein (128 aa).

The Lipoyl-binding domain maps to Thr-22–Lys-104. Lys-63 carries the post-translational modification N6-lipoyllysine.

It belongs to the GcvH family. In terms of assembly, the glycine cleavage system is composed of four proteins: P, T, L and H. Monomer. (R)-lipoate serves as cofactor.

In terms of biological role, the glycine cleavage system catalyzes the degradation of glycine. The H protein shuttles the methylamine group of glycine from the P protein to the T protein. In Thermus thermophilus (strain ATCC 27634 / DSM 579 / HB8), this protein is Glycine cleavage system H protein.